The chain runs to 176 residues: Protein tyrosine phosphatase PRL-1 (176 aa).

A Tyrosine-protein phosphatase domain is found at 13 to 165; the sequence is GESDAVVFRF…YKPRHQEGNE (153 aa). Cys52 and Cys107 form a disulfide bridge. Residue Asp75 is the Proton donor of the active site. Cys107 (phosphocysteine intermediate) is an active-site residue. 109 to 113 lines the substrate pocket; that stretch reads AGLGR. Cys173 is subject to Cysteine methyl ester. Cys173 carries S-farnesyl cysteine lipidation. Residues 174-176 constitute a propeptide, removed in mature form; sequence AVM.

It belongs to the protein-tyrosine phosphatase family.

It localises to the flagellar pocket. The enzyme catalyses O-phospho-L-tyrosyl-[protein] + H2O = L-tyrosyl-[protein] + phosphate. Its activity is regulated as follows. Activated in a reduced environment which promotes the reduction of the disulfide bond between the regulatory Cys-52 and the catalytic Cys-107 residues. Inhibited by sodium orthovanadate. Functionally, has protein tyrosine phosphatase activity. The polypeptide is Protein tyrosine phosphatase PRL-1 (Trypanosoma cruzi (strain CL Brener)).